Consider the following 278-residue polypeptide: Extracellular metalloprotease GLRG_06511 (278 aa).

The signal sequence occupies residues Met-1 to Ala-19. Asn-51 carries N-linked (GlcNAc...) asparagine glycosylation. Position 190 (His-190) interacts with Zn(2+). Glu-191 is an active-site residue. Zn(2+) is bound at residue His-194. Cys-227 and Cys-254 are oxidised to a cystine.

This sequence belongs to the peptidase M43B family.

The protein localises to the secreted. Functionally, secreted metalloproteinase that allows assimilation of proteinaceous substrates. This Colletotrichum graminicola (strain M1.001 / M2 / FGSC 10212) (Maize anthracnose fungus) protein is Extracellular metalloprotease GLRG_06511.